The chain runs to 492 residues: Coagulation factor X (492 aa).

Residues 1-23 form the signal peptide; sequence MAGLLHLVLLSTALGGLLRPAGS. Residues 24–40 constitute a propeptide that is removed on maturation; that stretch reads VFLPRDQAHRVLQRARR. The region spanning 41-85 is the Gla domain; sequence ANSFLEEVKQGNLERECLEEACSLEEAREVFEDAEQTDEFWSKYK. 12 positions are modified to 4-carboxyglutamate: Glu46, Glu47, Glu54, Glu56, Glu59, Glu60, Glu65, Glu66, Glu69, Glu72, Glu75, and Glu79. Cys57 and Cys62 are joined by a disulfide. Residues 86–122 enclose the EGF-like 1; calcium-binding domain; that stretch reads DGDQCEGHPCLNQGHCKDGIGDYTCTCAEGFEGKNCE. Disulfide bonds link Cys90/Cys101, Cys95/Cys110, Cys112/Cys121, Cys129/Cys140, Cys136/Cys149, Cys151/Cys164, Cys172/Cys341, Cys240/Cys245, Cys260/Cys276, Cys389/Cys403, and Cys414/Cys442. Position 103 is a (3R)-3-hydroxyaspartate (Asp103). In terms of domain architecture, EGF-like 2 spans 125 to 165; sequence TREICSLDNGGCDQFCREERSEVRCSCAHGYVLGDDSKSCV. The propeptide at 183–233 is activation peptide; it reads WAIHTSEDALDASELEHYDPADLSPTESSLDLLGLNRTEPSAGEDGSQVVR. A Sulfotyrosine modification is found at Tyr200. The O-linked (GalNAc...) threonine glycan is linked to Thr208. Asn218 carries N-linked (GlcNAc...) asparagine glycosylation. The 233-residue stretch at 234 to 466 folds into the Peptidase S1 domain; it reads IVGGRDCAEG…FLKWIDKIMK (233 aa). Active-site charge relay system residues include His275 and Asp321. Residue Ser418 is the Charge relay system of the active site. Residues 472–492 are disordered; it reads AGSRGHSEAPATWTVPPPLPL. Positions 476-492 are cleaved as a propeptide — may be removed but is not necessary for activation; it reads GHSEAPATWTVPPPLPL. The O-linked (GalNAc...) threonine glycan is linked to Thr485.

This sequence belongs to the peptidase S1 family. As to quaternary structure, the two chains are formed from a single-chain precursor by the excision of two Arg residues and are held together by 1 or more disulfide bonds. Forms a heterodimer with SERPINA5. Interacts (activated) with guianensin, an anticoagulant protein from Simulium guianense saliva. Interacts (activated) with simukunin, an anticoagulant protein from Simulium vittatum saliva. The vitamin K-dependent, enzymatic carboxylation of some glutamate residues allows the modified protein to bind calcium. Post-translationally, N- and O-glycosylated. In terms of processing, proteolytically cleaved and activated by cathepsin CTSG. The activation peptide is cleaved by factor IXa (in the intrinsic pathway), or by factor VIIa (in the extrinsic pathway). The iron and 2-oxoglutarate dependent 3-hydroxylation of aspartate and asparagine is (R) stereospecific within EGF domains.

It localises to the secreted. The catalysed reaction is Selective cleavage of Arg-|-Thr and then Arg-|-Ile bonds in prothrombin to form thrombin.. Inhibited by SERPINA5. In terms of biological role, factor Xa is a vitamin K-dependent glycoprotein that converts prothrombin to thrombin in the presence of factor Va, calcium and phospholipid during blood clotting. Factor Xa activates pro-inflammatory and pro-fibrotic signaling pathways in a protease-activated receptor (PAR)-dependent manner. This Bos taurus (Bovine) protein is Coagulation factor X (F10).